The following is a 207-amino-acid chain: Outer-membrane lipoprotein LolB (207 aa).

The first 21 residues, 1 to 21 (MPLPDFRLIRLLPLAALVLTA), serve as a signal peptide directing secretion. Cysteine 22 carries N-palmitoyl cysteine lipidation. The S-diacylglycerol cysteine moiety is linked to residue cysteine 22.

Belongs to the LolB family. Monomer.

The protein resides in the cell outer membrane. Plays a critical role in the incorporation of lipoproteins in the outer membrane after they are released by the LolA protein. This chain is Outer-membrane lipoprotein LolB, found in Escherichia coli O127:H6 (strain E2348/69 / EPEC).